Consider the following 242-residue polypeptide: Dehydration-responsive element-binding protein 1J (242 aa).

Over residues 20–29 the composition is skewed to low complexity; the sequence is SSATTAATAT. Residues 20–44 form a disordered region; that stretch reads SSATTAATATGPASPKRPAGRTKFQ. The segment at residues 50–109 is a DNA-binding region (AP2/ERF); it reads VFRGVRRRGRAGRWVCEVRVPGSRGDRLWVGTFDTAEEAARAHDAAMLALCGASASLNFA. Residues 143–184 are disordered; sequence FQRRGSTAATATATSGDAASTAPPSSSPVLSPNDDNASSAST. The segment covering 148-184 has biased composition (low complexity); sequence STAATATATSGDAASTAPPSSSPVLSPNDDNASSAST.

Belongs to the AP2/ERF transcription factor family. ERF subfamily.

It localises to the nucleus. Functionally, transcriptional activator that binds specifically to the DNA sequence 5'-[AG]CCGAC-3'. Binding to the C-repeat/DRE element mediates high salinity- and dehydration-inducible transcription. The polypeptide is Dehydration-responsive element-binding protein 1J (DREB1J) (Oryza sativa subsp. japonica (Rice)).